The chain runs to 287 residues: Serine/arginine-rich SC35-like splicing factor SCL33 (287 aa).

Residues 1 to 34 (MRGRSYTPSPPRGYGRRGRSPSPRGRYGGRSRDL) are disordered. Residues serine 9 and serine 20 each carry the phosphoserine modification. An RRM domain is found at 36-114 (TSLLVRNLRH…RELTVVFAEE (79 aa)). Residues 116-132 (RKKPTEMRARERGGGRF) show a composition bias toward basic and acidic residues. Residues 116 to 287 (RKKPTEMRAR…QYDEDRSPSQ (172 aa)) are disordered. A phosphoserine mark is found at serine 165, serine 175, serine 177, serine 188, and serine 190. Residues 177–187 (SPREERYDGRR) are compositionally biased toward basic and acidic residues. Basic residues predominate over residues 220–237 (SISRSPRRSRSPSPKRNR). Serine 238, serine 248, serine 271, serine 284, and serine 286 each carry phosphoserine. Over residues 244–260 (SISRSPRRSRSPRRSRR) the composition is skewed to basic residues. The segment covering 278 to 287 (QYDEDRSPSQ) has biased composition (basic and acidic residues).

Belongs to the splicing factor SR family. SCL subfamily. In terms of assembly, component of the spliceosome. Homodimer. Interacts with AFC2, CYP59, RS2Z33, RNU1 and SR45. The interaction with AFC2 depends on phosphorylation status. In terms of processing, phosphorylated by AFC2. As to expression, ubiquitous. Mostly expressed in roots, fruits and flowers, and, to a lower extent, in leaves.

It localises to the nucleus speckle. It is found in the nucleus. The protein resides in the nucleoplasm. The protein localises to the cytoplasm. Involved in intron recognition and spliceosome assembly. Binds to multiple 5'-GAAG-3' repeats found in its third intron, suggesting autoregulation of alternative splicing. May be necessary for accurate splicing of the 3' region of introns. The polypeptide is Serine/arginine-rich SC35-like splicing factor SCL33 (SCL33) (Arabidopsis thaliana (Mouse-ear cress)).